Consider the following 212-residue polypeptide: Ropporin-1B (212 aa).

An RIIa domain is found at 12 to 49 (PELPKMLKEFAKAAIRAQPQDLIQWGADYFEALSRGET). S56 carries the post-translational modification Phosphoserine. The tract at residues 209–212 (VWLE) is interaction with RHPN1.

Belongs to the ropporin family. As to quaternary structure, homodimer. Interacts with RHPN1. May interact with SPA17. Interacts with AKAP3. Interacts with FSCB; the interaction increases upon spermatozoa capacitation conditions. In terms of processing, sumoylated, sumoylation decreases upon spermatozoa capacitation conditions.

The protein localises to the cell projection. The protein resides in the cilium. Its subcellular location is the flagellum. Its function is as follows. Important for male fertility. With ROPN1L, involved in fibrous sheath integrity and sperm motility, plays a role in PKA-dependent signaling processes required for spermatozoa capacitation. The chain is Ropporin-1B (ROPN1B) from Homo sapiens (Human).